The sequence spans 103 residues: Large ribosomal subunit protein bL21 (103 aa).

The protein belongs to the bacterial ribosomal protein bL21 family. In terms of assembly, part of the 50S ribosomal subunit. Contacts protein L20.

This protein binds to 23S rRNA in the presence of protein L20. This Desulforapulum autotrophicum (strain ATCC 43914 / DSM 3382 / VKM B-1955 / HRM2) (Desulfobacterium autotrophicum) protein is Large ribosomal subunit protein bL21.